A 176-amino-acid chain; its full sequence is Cystatin-related protein 1 (176 aa).

The first 26 residues, 1 to 26, serve as a signal peptide directing secretion; sequence MCKTLHGTLLLLAIFVLFLNFSHATA. The propeptide occupies 27-31; the sequence is KRTRR. A glycan (N-linked (GlcNAc...) asparagine) is linked at asparagine 71. Cystine bridges form between cysteine 129–cysteine 139 and cysteine 153–cysteine 173.

It belongs to the cystatin family. In terms of tissue distribution, prostate and lacrimal gland.

This Rattus norvegicus (Rat) protein is Cystatin-related protein 1 (Andpro).